The sequence spans 212 residues: Large ribosomal subunit protein uL3 (212 aa).

Q154 carries the post-translational modification N5-methylglutamine.

It belongs to the universal ribosomal protein uL3 family. Part of the 50S ribosomal subunit. Forms a cluster with proteins L14 and L19. Methylated by PrmB.

In terms of biological role, one of the primary rRNA binding proteins, it binds directly near the 3'-end of the 23S rRNA, where it nucleates assembly of the 50S subunit. The polypeptide is Large ribosomal subunit protein uL3 (Hydrogenovibrio crunogenus (strain DSM 25203 / XCL-2) (Thiomicrospira crunogena)).